The primary structure comprises 209 residues: Peroxynitrite isomerase 2 (209 aa).

Residues 56 to 62 carry the GXWXGXG motif; sequence GVWRGEG. Heme b-binding residues include lysine 172 and histidine 199.

It belongs to the nitrobindin family. As to quaternary structure, homodimer. It depends on heme b as a cofactor.

It catalyses the reaction peroxynitrite = nitrate. Its pathway is nitrogen metabolism. In terms of biological role, heme-binding protein able to scavenge peroxynitrite and to protect free L-tyrosine against peroxynitrite-mediated nitration, by acting as a peroxynitrite isomerase that converts peroxynitrite to nitrate. Therefore, this protein likely plays a role in peroxynitrite sensing and in the detoxification of reactive nitrogen and oxygen species (RNS and ROS, respectively). Is able to bind nitric oxide (NO) in vitro, but may act as a sensor of peroxynitrite levels in vivo. This is Peroxynitrite isomerase 2 from Mycolicibacterium gilvum (strain PYR-GCK) (Mycobacterium gilvum (strain PYR-GCK)).